The following is a 1265-amino-acid chain: Nestin (1265 aa).

The segment at 1–16 (MELLGVRQPFGPQFQE) is head. The interval 17–52 (EKYQMLELNHRLESYLGRVKLLEEENKLLREEIHTL) is coil 1A. The 308-residue stretch at 17 to 324 (EKYQMLELNH…ALLDSEGLRI (308 aa)) folds into the IF rod domain. Residues 53–64 (KSSRDPAGQRKA) are linker 1. Residues 65-160 (QEEALSQARR…QVHQENMETM (96 aa)) form a coil 1B region. The interval 161 to 183 (QASLKQTKQVLMAPQRVQATSIP) is linker 12. Residues 184–203 (DLGQEYGYKAAQAWQEAANN) form a coil 2A region. The tract at residues 204–206 (YQK) is linker 2. The interval 207-324 (QVGRLEESLN…ALLDSEGLRI (118 aa)) is coil 2B. The tail stretch occupies residues 325 to 1265 (DRPTPNKTSS…EGDSWSSGDE (941 aa)). The span at 383–402 (PSWTLTRGTPQRPPSSTSMT) shows a compositional bias: polar residues. 5 disordered regions span residues 383-521 (PSWT…TEVS), 667-830 (FEVE…PDME), 863-1073 (HESL…KASQ), 1093-1116 (AQTT…LESS), and 1232-1265 (IRDD…SGDE). Basic and acidic residues predominate over residues 403–418 (EKTEDHISEETKRSAE). Residues 422–441 (DQLQQEKVQQDWTLESTLPK) are compositionally biased toward polar residues. A compositionally biased stretch (basic and acidic residues) spans 444 to 459 (AEPKPELQPEEIKVED). The segment covering 479–496 (LTSVPAEQQGSMSQTPET) has biased composition (polar residues). 2 stretches are compositionally biased toward acidic residues: residues 508–520 (EVSE…DTEV) and 730–739 (LNEDQSEAEE). 3 stretches are compositionally biased toward basic and acidic residues: residues 784–796 (YKSD…HIGE), 803–819 (EKER…RFNT), and 863–897 (HESL…KEED). The span at 901–910 (FEQNENQQLT) shows a compositional bias: polar residues. Residues 911-935 (EHQHVHTEQVEDKPVHSHETQEHVN) are compositionally biased toward basic and acidic residues. The segment covering 943-956 (SERSQQEQLEESSL) has biased composition (low complexity). Positions 1015–1043 (PNASQCFQNTSLLAAATPNEQPLTFTNEV) are enriched in polar residues. Residues 1061–1070 (SEEKSTDEPK) show a composition bias toward basic and acidic residues. Composition is skewed to polar residues over residues 1105 to 1116 (SISPVNENLESS) and 1242 to 1251 (PAQSKIVQSD). The span at 1252-1265 (DSADEGDSWSSGDE) shows a compositional bias: acidic residues.

It belongs to the intermediate filament family. As to quaternary structure, forms homodimers and homotetramers in vitro. In mixtures with other intermediate filament proteins such as vimentin and alpha-internexin, preferentially forms heterodimers. In terms of tissue distribution, widely expressed throughout the developing nervous system at 24 hours post-fertilization (hpf). As development progresses, expression becomes restricted to proliferative zones of the developing and postembryonic central nervous system. In the peripheral nervous system, expressed in the cranial ganglia. Also expressed in mesodermal muscle precursor cells and in cranial mesenchymal tissue.

In terms of biological role, promotes the disassembly of phosphorylated vimentin intermediate filaments (IF) during mitosis and may play a role in the trafficking and distribution of IF proteins and other cellular factors to daughter cells during progenitor cell division. Required for survival, renewal and mitogen-stimulated proliferation of neural progenitor cells. Required for brain and eye development. This Danio rerio (Zebrafish) protein is Nestin (nes).